The chain runs to 197 residues: 3-isopropylmalate dehydratase small subunit (197 aa).

This sequence belongs to the LeuD family. LeuD type 1 subfamily. In terms of assembly, heterodimer of LeuC and LeuD.

The enzyme catalyses (2R,3S)-3-isopropylmalate = (2S)-2-isopropylmalate. Its pathway is amino-acid biosynthesis; L-leucine biosynthesis; L-leucine from 3-methyl-2-oxobutanoate: step 2/4. Functionally, catalyzes the isomerization between 2-isopropylmalate and 3-isopropylmalate, via the formation of 2-isopropylmaleate. This Acidothermus cellulolyticus (strain ATCC 43068 / DSM 8971 / 11B) protein is 3-isopropylmalate dehydratase small subunit.